We begin with the raw amino-acid sequence, 114 residues long: Macrophage migration inhibitory factor homolog (114 aa).

P2 (proton acceptor; via imino nitrogen) is an active-site residue. Positions 33 and 98 each coordinate substrate.

Belongs to the MIF family.

Its subcellular location is the secreted. The catalysed reaction is L-dopachrome = 5,6-dihydroxyindole-2-carboxylate. It carries out the reaction 3-phenylpyruvate = enol-phenylpyruvate. Its function is as follows. Tautomerization of the methyl ester of L-dopachrome. Inhibits migration of human peripheral blood mononuclear cells. The protein is Macrophage migration inhibitory factor homolog of Trichuris trichiura (Whipworm).